Consider the following 311-residue polypeptide: D-allose-binding periplasmic protein (311 aa).

Positions 1-23 (MNKYLKYFSGTLVGLMLSTSAFA) are cleaved as a signal peptide.

The protein belongs to the bacterial solute-binding protein 2 family.

The protein localises to the periplasm. Its function is as follows. Part of the binding-protein-dependent transport system AlsBAC for D-allose. The protein is D-allose-binding periplasmic protein (alsB) of Escherichia coli (strain K12).